Reading from the N-terminus, the 157-residue chain is SsrA-binding protein (157 aa).

The disordered stretch occupies residues 132-157 (EHDKRDTIKEREGKREVERAMKSRHR).

It belongs to the SmpB family.

It is found in the cytoplasm. Required for rescue of stalled ribosomes mediated by trans-translation. Binds to transfer-messenger RNA (tmRNA), required for stable association of tmRNA with ribosomes. tmRNA and SmpB together mimic tRNA shape, replacing the anticodon stem-loop with SmpB. tmRNA is encoded by the ssrA gene; the 2 termini fold to resemble tRNA(Ala) and it encodes a 'tag peptide', a short internal open reading frame. During trans-translation Ala-aminoacylated tmRNA acts like a tRNA, entering the A-site of stalled ribosomes, displacing the stalled mRNA. The ribosome then switches to translate the ORF on the tmRNA; the nascent peptide is terminated with the 'tag peptide' encoded by the tmRNA and targeted for degradation. The ribosome is freed to recommence translation, which seems to be the essential function of trans-translation. The polypeptide is SsrA-binding protein (Paracidovorax citrulli (strain AAC00-1) (Acidovorax citrulli)).